The chain runs to 262 residues: Probable dihydroorotate dehydrogenase B (NAD(+)), electron transfer subunit (262 aa).

Residues 4–97 enclose the FAD-binding FR-type domain; that stretch reads VKPIPAEVVE…RGPYGKPFEV (94 aa). Cys-217, Cys-222, Cys-225, and Cys-234 together coordinate [2Fe-2S] cluster.

It belongs to the PyrK family. In terms of assembly, heterotetramer of 2 PyrK and 2 PyrD type B subunits. [2Fe-2S] cluster is required as a cofactor. Requires FAD as cofactor.

It functions in the pathway pyrimidine metabolism; UMP biosynthesis via de novo pathway; orotate from (S)-dihydroorotate (NAD(+) route): step 1/1. Responsible for channeling the electrons from the oxidation of dihydroorotate from the FMN redox center in the PyrD type B subunit to the ultimate electron acceptor NAD(+). The sequence is that of Probable dihydroorotate dehydrogenase B (NAD(+)), electron transfer subunit from Methanopyrus kandleri (strain AV19 / DSM 6324 / JCM 9639 / NBRC 100938).